A 794-amino-acid chain; its full sequence is Phenylalanine--tRNA ligase beta subunit (794 aa).

The region spanning 40-158 (NSLNSELVLG…LKKYLGKDVK (119 aa)) is the tRNA-binding domain. Residues 402–477 (KNKTEFEIKI…RLYSYDNIQE (76 aa)) form the B5 domain. Positions 455, 461, 464, and 465 each coordinate Mg(2+). Positions 702 to 794 (SKFQSSSRDL…NVKKMKVVIR (93 aa)) constitute an FDX-ACB domain.

It belongs to the phenylalanyl-tRNA synthetase beta subunit family. Type 1 subfamily. As to quaternary structure, tetramer of two alpha and two beta subunits. Mg(2+) is required as a cofactor.

The protein resides in the cytoplasm. It catalyses the reaction tRNA(Phe) + L-phenylalanine + ATP = L-phenylalanyl-tRNA(Phe) + AMP + diphosphate + H(+). The polypeptide is Phenylalanine--tRNA ligase beta subunit (Mycoplasma capricolum subsp. capricolum (strain California kid / ATCC 27343 / NCTC 10154)).